The sequence spans 274 residues: Pantothenate synthetase (274 aa).

ATP is bound at residue 26–33 (MGNLHAGH). H33 acts as the Proton donor in catalysis. Q57 contributes to the (R)-pantoate binding site. Q57 lines the beta-alanine pocket. 143–146 (GKKD) lines the ATP pocket. Position 149 (Q149) interacts with (R)-pantoate. ATP is bound by residues V172 and 180 to 183 (LSSR).

The protein belongs to the pantothenate synthetase family. In terms of assembly, homodimer.

It localises to the cytoplasm. The enzyme catalyses (R)-pantoate + beta-alanine + ATP = (R)-pantothenate + AMP + diphosphate + H(+). Its pathway is cofactor biosynthesis; (R)-pantothenate biosynthesis; (R)-pantothenate from (R)-pantoate and beta-alanine: step 1/1. Its function is as follows. Catalyzes the condensation of pantoate with beta-alanine in an ATP-dependent reaction via a pantoyl-adenylate intermediate. In Dechloromonas aromatica (strain RCB), this protein is Pantothenate synthetase.